Here is a 455-residue protein sequence, read N- to C-terminus: Oxysterols receptor LXR-beta (455 aa).

The span at 1–10 shows a compositional bias: polar residues; the sequence is MSTPTTNSVD. The segment at 1-53 is disordered; the sequence is MSTPTTNSVDTPLPGNGPSTPSSSPGGKEDGPEPCPGGADPDVPSTDGADSAS. The tract at residues 1–80 is transactivation AF-1; required for ligand-independent transactivation function; sequence MSTPTTNSVD…GPAPKMLGDE (80 aa). A compositionally biased stretch (low complexity) spans 14–26; sequence PGNGPSTPSSSPG. The nuclear receptor DNA-binding region spans 79–156; sequence DELCQVCGDT…AGMREQCVLS (78 aa). NR C4-type zinc fingers lie at residues 82–102 and 120–144; these read CQVC…CEGC and CRGG…LRKC. The interval 164 to 210 is disordered; it reads KIRKQQQQQQQQSSPTGPGVSSSSPASGPGASPGGSDGGGQGSGEGE. Positions 168 to 193 are enriched in low complexity; the sequence is QQQQQQQQSSPTGPGVSSSSPASGPG. A compositionally biased stretch (gly residues) spans 194–210; the sequence is ASPGGSDGGGQGSGEGE. The tract at residues 214-455 is transactivation AF-2; required for ligand-dependent transactivation function; mediates interaction with CCAR2; it reads LTAAQELMIQ…LLSEIWDVHE (242 aa). The NR LBD domain maps to 217–455; sequence AQELMIQQLV…LLSEIWDVHE (239 aa). Glycyl lysine isopeptide (Lys-Gly) (interchain with G-Cter in SUMO2) cross-links involve residues lysine 404 and lysine 442.

The protein belongs to the nuclear hormone receptor family. NR1 subfamily. In terms of assembly, forms a heterodimer with RXR. Interacts with CCAR2 (via N-terminus) in a ligand-independent manner. Interacts (when sumoylated) with GPS2; interaction with GPS2 onto hepatic acute phase protein promoters prevents N-Cor corepressor complex dissociation. Interacts with ABCA12 and ABCA1; this interaction is required for ABCA1 localization to the cell surface and is necessary for its normal activity and stability. Post-translationally, sumoylated by SUMO2 at Lys-404 and Lys-442 during the hepatic acute phase response, leading to promote interaction with GPS2 and prevent N-Cor corepressor complex dissociation.

Its subcellular location is the nucleus. Nuclear receptor that exhibits a ligand-dependent transcriptional activation activity. Binds preferentially to double-stranded oligonucleotide direct repeats having the consensus half-site sequence 5'-AGGTCA-3' and 4-nt spacing (DR-4). Regulates cholesterol uptake through MYLIP-dependent ubiquitination of LDLR, VLDLR and LRP8; DLDLR and LRP8. Interplays functionally with RORA for the regulation of genes involved in liver metabolism. Induces LPCAT3-dependent phospholipid remodeling in endoplasmic reticulum (ER) membranes of hepatocytes, driving SREBF1 processing and lipogenesis. Via LPCAT3, triggers the incorporation of arachidonate into phosphatidylcholines of ER membranes, increasing membrane dynamics and enabling triacylglycerols transfer to nascent very low-density lipoprotein (VLDL) particles. Via LPCAT3 also counteracts lipid-induced ER stress response and inflammation, likely by modulating SRC kinase membrane compartmentalization and limiting the synthesis of lipid inflammatory mediators. Plays an anti-inflammatory role during the hepatic acute phase response by acting as a corepressor: inhibits the hepatic acute phase response by preventing dissociation of the N-Cor corepressor complex. This is Oxysterols receptor LXR-beta (NR1H2) from Bos taurus (Bovine).